The following is a 370-amino-acid chain: Neutral protease 2 homolog AFUA_4G13750 (370 aa).

The signal sequence occupies residues 1–19; that stretch reads MKVTILASAILALINGALA. Positions 20–172 are excised as a propeptide; the sequence is LPANTPTLDV…PQAIKLLDRR (153 aa). 2 disulfide bridges follow: C178–C250 and C257–C275. Position 300 (H300) interacts with Zn(2+). E301 is an active-site residue. 2 residues coordinate Zn(2+): H304 and D315.

This sequence belongs to the peptidase M35 family. Zn(2+) is required as a cofactor.

It is found in the secreted. The catalysed reaction is Preferential cleavage of bonds with hydrophobic residues in P1'. Also 3-Asn-|-Gln-4 and 8-Gly-|-Ser-9 bonds in insulin B chain.. Its function is as follows. Secreted metalloproteinase that allows assimilation of proteinaceous substrates. Shows high activities on basic nuclear substrates such as histone and protamine. May be involved in virulence. This is Neutral protease 2 homolog AFUA_4G13750 from Aspergillus fumigatus (strain ATCC MYA-4609 / CBS 101355 / FGSC A1100 / Af293) (Neosartorya fumigata).